The following is a 776-amino-acid chain: Venom dipeptidyl peptidase 4 (776 aa).

The signal sequence occupies residues methionine 1–threonine 25. N-linked (GlcNAc...) asparagine glycans are attached at residues asparagine 44, asparagine 66, and asparagine 329. Cystine bridges form between cysteine 449/cysteine 452 and cysteine 462/cysteine 480. N-linked (GlcNAc...) asparagine glycosylation is found at asparagine 504 and asparagine 577. The active-site Charge relay system is the serine 638. A disulfide bond links cysteine 658 and cysteine 769. Residues asparagine 688 and asparagine 693 are each glycosylated (N-linked (GlcNAc...) asparagine). Catalysis depends on charge relay system residues aspartate 717 and histidine 749.

It belongs to the peptidase S9B family. DPPIV subfamily. As to expression, expressed by the venom gland.

Its subcellular location is the secreted. The enzyme catalyses Release of an N-terminal dipeptide, Xaa-Yaa-|-Zaa-, from a polypeptide, preferentially when Yaa is Pro, provided Zaa is neither Pro nor hydroxyproline.. Inhibited by diprotin A. Its function is as follows. Venom dipeptidyl-peptidase which removes N-terminal dipeptides sequentially from polypeptides having unsubstituted N-termini provided that the penultimate residue is proline. May process venom proteins into their active forms and/or modulate the chemotactic activity of immune cells after the insect sting. This chain is Venom dipeptidyl peptidase 4, found in Vespula vulgaris (Yellow jacket).